A 443-amino-acid polypeptide reads, in one-letter code: Squalene synthase (443 aa).

Transmembrane regions (helical) follow at residues 291–311 and 423–443; these read TSFNFCAIPQVMAIATLELVF and ILLLSLGVAVFGVVYGVVRII.

The protein belongs to the phytoene/squalene synthase family. Requires Mg(2+) as cofactor.

The protein resides in the endoplasmic reticulum membrane. The enzyme catalyses 2 (2E,6E)-farnesyl diphosphate + NADPH + H(+) = squalene + 2 diphosphate + NADP(+). It catalyses the reaction 2 (2E,6E)-farnesyl diphosphate + NADH + H(+) = squalene + 2 diphosphate + NAD(+). It functions in the pathway terpene metabolism; lanosterol biosynthesis; lanosterol from farnesyl diphosphate: step 1/3. Functionally, catalyzes the condensation of 2 two farnesyl pyrophosphate moieties to form squalene. It is the first committed enzyme of the sterol biosynthesis pathway. Required for the biosynthesis of ergosterol. In Cyberlindnera jadinii (Torula yeast), this protein is Squalene synthase (ERG9).